Reading from the N-terminus, the 865-residue chain is DNA topoisomerase 3-beta (865 aa).

Positions 6 to 151 (RVLMVAEKPS…KVYRARFSSV (146 aa)) constitute a Toprim domain. Positions 12, 116, and 118 each coordinate Mg(2+). Residues 167 to 587 (NRDEALAVDA…HVIQQFRRKF (421 aa)) enclose the Topo IA-type catalytic domain. The interaction with DNA stretch occupies residues 209-214 (SYGPCQ). The O-(5'-phospho-DNA)-tyrosine intermediate role is filled by Tyr-331. Basic residues predominate over residues 833-853 (RRGGRGRGRGRGRGRGGRRGS). A disordered region spans residues 833–865 (RRGGRGRGRGRGRGRGGRRGSKSVDPKMSFRDF). Residues 854-865 (KSVDPKMSFRDF) are compositionally biased toward basic and acidic residues.

It belongs to the type IA topoisomerase family. The cofactor is Mg(2+).

The catalysed reaction is ATP-independent breakage of single-stranded DNA, followed by passage and rejoining.. Its function is as follows. Releases the supercoiling and torsional tension of DNA introduced during the DNA replication and transcription by transiently cleaving and rejoining one strand of the DNA duplex. Introduces a single-strand break via transesterification at a target site in duplex DNA. The scissile phosphodiester is attacked by the catalytic tyrosine of the enzyme, resulting in the formation of a DNA-(5'-phosphotyrosyl)-enzyme intermediate and the expulsion of a 3'-OH DNA strand. The free DNA strand than undergoes passage around the unbroken strand thus removing DNA supercoils. Finally, in the religation step, the DNA 3'-OH attacks the covalent intermediate to expel the active-site tyrosine and restore the DNA phosphodiester backbone. This Arabidopsis thaliana (Mouse-ear cress) protein is DNA topoisomerase 3-beta.